The sequence spans 142 residues: HTH-type transcriptional regulator MntR (142 aa).

The region spanning 1–63 (MPTPSMEDYI…YEKYRGLVLT (63 aa)) is the HTH dtxR-type domain. Positions 8, 11, 77, 99, 102, and 103 each coordinate Mn(2+).

Belongs to the DtxR/MntR family. Homodimer.

Its subcellular location is the cytoplasm. Its activity is regulated as follows. DNA binding is strongly activated by Mn(2+). Functionally, central regulator of manganese homeostasis. The sequence is that of HTH-type transcriptional regulator MntR from Bacillus cereus (strain B4264).